A 273-amino-acid polypeptide reads, in one-letter code: Cysteine protease S273R (273 aa).

Residues His168 and Asn187 contribute to the active site. Position 226 (Gln226) interacts with substrate. The Nucleophile role is filled by Cys232.

It belongs to the peptidase C63 family.

The protein resides in the host cytoplasm. Its subcellular location is the virion. Cysteine protease that plays several role during infection including processing of the structural polyprotein or inhibition of the host immune response. Catalyzes the maturation of the pp220 and pp62 polyprotein precursors into core-shell proteins. Plays a role in the disruption of host pyroptosis via specific cleavage of gasdermin D/GSDMD. In addition, strongly decreases the host cGAS-STING signaling by targeting IKBKE via its enzymatic activity. Also impairs host FOXJ1-mediated antiviral effect via degradation of FOXJ1. Cleaves host G3BP1 inducing loss of stress granules formation. Interacts with and induces the degradation of host STAT2 via polyubiquitination of the latter. The protein is Cysteine protease S273R of Ornithodoros (relapsing fever ticks).